A 651-amino-acid polypeptide reads, in one-letter code: Protein RcaC (651 aa).

The 115-residue stretch at 2 to 116 (KILLVEDDDV…ELIARIRALL (115 aa)) folds into the Response regulatory 1 domain. Asp-51 is subject to 4-aspartylphosphate. Residues 124–223 (FPLLTWGDLL…MHGRGYYLKA (100 aa)) constitute a DNA-binding region (ompR/PhoB-type). Response regulatory domains lie at 384 to 519 (LLLM…VNLL) and 527 to 643 (KVMI…LRRL).

Required for chromatic adaptation. Thought to be a positive regulator of phycobiliproteins. The polypeptide is Protein RcaC (rcaC) (Microchaete diplosiphon (Fremyella diplosiphon)).